Consider the following 263-residue polypeptide: uncharacterized protein (263 aa).

12-19 (KGGVGKTT) serves as a coordination point for ATP.

It belongs to the ParA family. MinD subfamily.

This is an uncharacterized protein from Methanocaldococcus jannaschii (strain ATCC 43067 / DSM 2661 / JAL-1 / JCM 10045 / NBRC 100440) (Methanococcus jannaschii).